We begin with the raw amino-acid sequence, 553 residues long: Urocanate hydratase (553 aa).

Residues 45-46 (GG), Gln123, 169-171 (GMG), Asp189, Arg194, 235-236 (NA), 256-260 (QTSAH), 266-267 (YV), Tyr315, and Gly485 each bind NAD(+).

Belongs to the urocanase family. NAD(+) is required as a cofactor.

The protein resides in the cytoplasm. The catalysed reaction is 4-imidazolone-5-propanoate = trans-urocanate + H2O. It functions in the pathway amino-acid degradation; L-histidine degradation into L-glutamate; N-formimidoyl-L-glutamate from L-histidine: step 2/3. Catalyzes the conversion of urocanate to 4-imidazolone-5-propionate. The sequence is that of Urocanate hydratase from Staphylococcus saprophyticus subsp. saprophyticus (strain ATCC 15305 / DSM 20229 / NCIMB 8711 / NCTC 7292 / S-41).